The sequence spans 664 residues: Macoilin (664 aa).

The next 4 helical transmembrane spans lie at 28–48, 75–95, 120–140, and 154–174; these read TFLY…DFVL, AFSV…LLFI, VCLP…AIRF, and FAAH…KSYV. Residues 253 to 265 show a composition bias toward basic and acidic residues; sequence REKGKEKDKDAKK. The tract at residues 253–274 is disordered; that stretch reads REKGKEKDKDAKKHNLGINNNN. S305 carries the post-translational modification Phosphoserine. Over residues 320 to 348 the composition is skewed to polar residues; it reads KNYKNASGVVNSSPRSHSATNGSIPSSSS. A disordered region spans residues 320-367; that stretch reads KNYKNASGVVNSSPRSHSATNGSIPSSSSKNEKKQKCTSKSPSAHKDL. N-linked (GlcNAc...) asparagine glycosylation occurs at N324. A Phosphoserine modification is found at S332. N340 and N452 each carry an N-linked (GlcNAc...) asparagine glycan. The segment at 630 to 664 is disordered; that stretch reads TSPLSPVSPHYSSKFVETSPSGLDPNASVYQPLKK. A phosphoserine mark is found at S631 and S634. N655 carries an N-linked (GlcNAc...) asparagine glycan.

The protein belongs to the macoilin family.

It is found in the rough endoplasmic reticulum membrane. It localises to the nucleus membrane. Functionally, plays a role in the regulation of neuronal activity. In Sus scrofa (Pig), this protein is Macoilin (MACO1).